Consider the following 257-residue polypeptide: Ribonuclease HII (257 aa).

In terms of domain architecture, RNase H type-2 spans 71–257; sequence SLIAGIDEVG…TSFEPIKSML (187 aa). The a divalent metal cation site is built by Asp-77, Glu-78, and Asp-172.

It belongs to the RNase HII family. The cofactor is Mn(2+). Mg(2+) serves as cofactor.

Its subcellular location is the cytoplasm. It catalyses the reaction Endonucleolytic cleavage to 5'-phosphomonoester.. Endonuclease that specifically degrades the RNA of RNA-DNA hybrids. This Streptococcus uberis (strain ATCC BAA-854 / 0140J) protein is Ribonuclease HII.